A 220-amino-acid chain; its full sequence is Ribonuclease HII (220 aa).

The RNase H type-2 domain maps to 32 to 220 (KHIAGIDEAG…FAPIKGRFDC (189 aa)). Aspartate 38, glutamate 39, and aspartate 130 together coordinate a divalent metal cation.

It belongs to the RNase HII family. Mn(2+) is required as a cofactor. It depends on Mg(2+) as a cofactor.

It localises to the cytoplasm. The catalysed reaction is Endonucleolytic cleavage to 5'-phosphomonoester.. Endonuclease that specifically degrades the RNA of RNA-DNA hybrids. In Brucella suis (strain ATCC 23445 / NCTC 10510), this protein is Ribonuclease HII.